We begin with the raw amino-acid sequence, 352 residues long: Uroporphyrinogen decarboxylase (352 aa).

Substrate is bound by residues 26-30 (RQAGR), D76, Y153, S208, and H323.

The protein belongs to the uroporphyrinogen decarboxylase family. Homodimer.

It is found in the cytoplasm. The catalysed reaction is uroporphyrinogen III + 4 H(+) = coproporphyrinogen III + 4 CO2. Its pathway is porphyrin-containing compound metabolism; protoporphyrin-IX biosynthesis; coproporphyrinogen-III from 5-aminolevulinate: step 4/4. Its function is as follows. Catalyzes the decarboxylation of four acetate groups of uroporphyrinogen-III to yield coproporphyrinogen-III. The sequence is that of Uroporphyrinogen decarboxylase from Prochlorococcus marinus (strain MIT 9303).